A 369-amino-acid chain; its full sequence is Peptide chain release factor 2 (369 aa).

Q249 is subject to N5-methylglutamine.

Belongs to the prokaryotic/mitochondrial release factor family. In terms of processing, methylated by PrmC. Methylation increases the termination efficiency of RF2.

Its subcellular location is the cytoplasm. Its function is as follows. Peptide chain release factor 2 directs the termination of translation in response to the peptide chain termination codons UGA and UAA. This chain is Peptide chain release factor 2, found in Thermosipho africanus (strain TCF52B).